A 219-amino-acid chain; its full sequence is Cytidylate kinase (219 aa).

An ATP-binding site is contributed by 15–23; sequence GPAASGKGT.

Belongs to the cytidylate kinase family. Type 1 subfamily.

The protein resides in the cytoplasm. It carries out the reaction CMP + ATP = CDP + ADP. The enzyme catalyses dCMP + ATP = dCDP + ADP. In Brucella abortus (strain S19), this protein is Cytidylate kinase.